Here is a 722-residue protein sequence, read N- to C-terminus: Polyribonucleotide nucleotidyltransferase (722 aa).

Mg(2+)-binding residues include D487 and D493. Residues 554–613 (PRMVSFKIHPDKIREVIGKGGATIQALTKETGCSIDIKDDGTVTIASTSAEGMAEAKARI) form the KH domain. An S1 motif domain is found at 623–691 (GKIYEGPVVK…ERGRLRLSLK (69 aa)).

Belongs to the polyribonucleotide nucleotidyltransferase family. The cofactor is Mg(2+).

Its subcellular location is the cytoplasm. The enzyme catalyses RNA(n+1) + phosphate = RNA(n) + a ribonucleoside 5'-diphosphate. Its function is as follows. Involved in mRNA degradation. Catalyzes the phosphorolysis of single-stranded polyribonucleotides processively in the 3'- to 5'-direction. This chain is Polyribonucleotide nucleotidyltransferase, found in Polynucleobacter asymbioticus (strain DSM 18221 / CIP 109841 / QLW-P1DMWA-1) (Polynucleobacter necessarius subsp. asymbioticus).